The chain runs to 177 residues: Large ribosomal subunit protein uL6 (177 aa).

A disordered region spans residues 151 to 177 (YRPPEPYKGKGIRYSDEHVVRKEAKKK). Residues 155–177 (EPYKGKGIRYSDEHVVRKEAKKK) are compositionally biased toward basic and acidic residues.

This sequence belongs to the universal ribosomal protein uL6 family. In terms of assembly, part of the 50S ribosomal subunit.

This protein binds to the 23S rRNA, and is important in its secondary structure. It is located near the subunit interface in the base of the L7/L12 stalk, and near the tRNA binding site of the peptidyltransferase center. The polypeptide is Large ribosomal subunit protein uL6 (Psychrobacter sp. (strain PRwf-1)).